The sequence spans 257 residues: MSVPLILTILAGAATFIGAFLGVLGQKPSNRLLAFSLGFAAGIMLLISLMEMLPAALAAEGMSPVLGYGMFIFGLLGYFGLDRMLPHAHPQDLMQKSVQLLPKSIKRTAILLTLGISLHNFPEGIATFVTASSNLELGFGIALAVALHNIPEGLAVAGPVYAATGSKRTAILWAGISGLAEILGGVLAWLILGSMISPVVMAAIMAAVAGIMVALSVDELMPLAKEIDPNNNPSYGVLCGMSVMGFSLVLLQTAGIG.

8 helical membrane passes run 5-25, 32-52, 61-81, 109-129, 137-157, 171-191, 195-215, and 236-256; these read LILT…GVLG, LLAF…LMEM, GMSP…YFGL, AILL…ATFV, LGFG…LAVA, ILWA…AWLI, MISP…MVAL, and GVLC…TAGI. N120 and E123 together coordinate Fe(2+). Zn(2+) is bound by residues E123 and H148. 3 residues coordinate Fe(2+): N149, E152, and E181. E152 is a binding site for Zn(2+).

Belongs to the ZIP transporter (TC 2.A.5) family. ZupT subfamily.

The protein localises to the cell inner membrane. The enzyme catalyses Zn(2+)(in) = Zn(2+)(out). In terms of biological role, mediates zinc uptake. May also transport other divalent cations. The protein is Zinc transporter ZupT of Shigella flexneri serotype 5b (strain 8401).